The sequence spans 137 residues: Putative nickel-responsive regulator (137 aa).

Residues H78, H89, H91, and C97 each contribute to the Ni(2+) site.

Belongs to the transcriptional regulatory CopG/NikR family. It depends on Ni(2+) as a cofactor.

Its function is as follows. Transcriptional regulator. This chain is Putative nickel-responsive regulator, found in Syntrophus aciditrophicus (strain SB).